The sequence spans 189 residues: HGPRTase-like protein 2 (189 aa).

It belongs to the purine/pyrimidine phosphoribosyltransferase family. Archaeal HPRT subfamily.

Its function is as follows. May catalyze a purine salvage reaction, the substrate is unknown. This chain is HGPRTase-like protein 2, found in Halalkalicoccus jeotgali (strain DSM 18796 / CECT 7217 / JCM 14584 / KCTC 4019 / B3).